Here is a 412-residue protein sequence, read N- to C-terminus: CCA-adding enzyme (412 aa).

Residues Ser-41 and Lys-44 each contribute to the ATP site. Residues Ser-41 and Lys-44 each contribute to the CTP site. Residues Asp-53, Asp-55, and Asp-106 each coordinate Mg(2+). Residues His-129, Lys-149, and Tyr-158 each contribute to the ATP site. CTP-binding residues include His-129, Lys-149, and Tyr-158.

It belongs to the tRNA nucleotidyltransferase/poly(A) polymerase family. Archaeal CCA-adding enzyme subfamily. In terms of assembly, homodimer. It depends on Mg(2+) as a cofactor.

The catalysed reaction is a tRNA precursor + 2 CTP + ATP = a tRNA with a 3' CCA end + 3 diphosphate. It carries out the reaction a tRNA with a 3' CCA end + 2 CTP + ATP = a tRNA with a 3' CCACCA end + 3 diphosphate. In terms of biological role, catalyzes the addition and repair of the essential 3'-terminal CCA sequence in tRNAs without using a nucleic acid template. Adds these three nucleotides in the order of C, C, and A to the tRNA nucleotide-73, using CTP and ATP as substrates and producing inorganic pyrophosphate. tRNA 3'-terminal CCA addition is required both for tRNA processing and repair. Also involved in tRNA surveillance by mediating tandem CCA addition to generate a CCACCA at the 3' terminus of unstable tRNAs. While stable tRNAs receive only 3'-terminal CCA, unstable tRNAs are marked with CCACCA and rapidly degraded. This is CCA-adding enzyme from Saccharolobus islandicus (strain Y.N.15.51 / Yellowstone #2) (Sulfolobus islandicus).